The chain runs to 583 residues: Protein cps3 (583 aa).

2 consecutive C3H1-type zinc fingers follow at residues 35 to 62 and 64 to 91; these read SLQHVPCKFFRQGTCTSGKNCIFSHDLE and ATEKTICKYFQKGNCKFGSKCALEHVLP. 3 disordered regions span residues 318–346, 471–490, and 504–532; these read LGRPTKSPSVPTSVGSNKSRKFPGINGST, KVSSNLNSGNPTPYNSYNGT, and RQESEKATPPSLNKVSQEPLTATTPKNLG. 3 stretches are compositionally biased toward polar residues: residues 323 to 334, 475 to 490, and 513 to 532; these read KSPSVPTSVGSN, NLNSGNPTPYNSYNGT, and PSLNKVSQEPLTATTPKNLG.

It is found in the cytoplasm. Responsible for supersensitivity to the spindle poison, isopropyl N-3-chlorophenyl carbamate. Has a role in meiosis. This Schizosaccharomyces pombe (strain 972 / ATCC 24843) (Fission yeast) protein is Protein cps3 (cps3).